A 461-amino-acid polypeptide reads, in one-letter code: Lysosomal proton-coupled steroid conjugate and bile acid symporter SLC46A3 (461 aa).

An N-terminal signal peptide occupies residues 1–25 (MKIPFVEPVICLSVFAVTLNSPLTT). Topologically, residues 26–70 (QYVYRRIWEETGNYSIALESNTSECAKNKSSPIFAFQEEVQKKVS) are extracellular. N-linked (GlcNAc...) asparagine glycans are attached at residues Asn-38, Asn-46, and Asn-53. Residues 71-91 (LFNLEMDISGLIPGLVSTFVF) traverse the membrane as a helical segment. Over 92–101 (LSHSDHGGRK) the chain is Cytoplasmic. A helical membrane pass occupies residues 102–124 (FPLILSSVGALANSAWLCLLSYF). The Extracellular portion of the chain corresponds to 125–133 (ALPIQLLIA). Residues 134 to 156 (STFIGALFGNYTTFLGASFAYIV) traverse the membrane as a helical segment. Over 157–170 (DQCKEKKQRTIRIA) the chain is Cytoplasmic. Residues 171 to 191 (IIDFLFGVVSGLTGLSSGYFI) traverse the membrane as a helical segment. Residues 192–195 (RGLG) are Extracellular-facing. Residues 196–216 (FVWSFLIVTVALFVNLIYILL) traverse the membrane as a helical segment. Residues 217–261 (FLEDSMKESSSQNISVSWTETFKNLFHRTYMLFKNASGEQQSLCC) lie on the Cytoplasmic side of the membrane. Residues 262–282 (LLLFTMITYFFVTIGVSPIFV) form a helical membrane-spanning segment. Topologically, residues 283-294 (LYELDSPLCWDE) are extracellular. A helical membrane pass occupies residues 295-315 (VLIGYGSALGSVTFFSSFLGI). The Cytoplasmic segment spans residues 316–324 (WLFSYCMED). A helical transmembrane segment spans residues 325-345 (IHMAFIGTFTTMVGMAMTAFA). At 346–347 (RT) the chain is on the extracellular side. A helical transmembrane segment spans residues 348 to 368 (TLMMFLVRLPFLFTVMPLSVL). At 369 to 382 (RSMISKVVHSTEQG) the chain is on the cytoplasmic side. A helical transmembrane segment spans residues 383–403 (TMFACLAFLETLGGITAVSTF). Topologically, residues 404 to 415 (NGIYSATVAWCK) are extracellular. A helical membrane pass occupies residues 416–436 (GFVFLLSAVLLLIPAISLCVI). The Cytoplasmic segment spans residues 437–461 (KYVSRNTGSYVLLIQEESSEDTSDR). Residues 446-449 (YVLL) carry the Tyrosine-based lysosomal-sorting motif motif.

This sequence belongs to the major facilitator superfamily. SLC46A family.

Its subcellular location is the lysosome membrane. The catalysed reaction is estrone 3-sulfate(out) + n H(+)(out) = estrone 3-sulfate(in) + n H(+)(in). It catalyses the reaction 25-hydroxyvitamin D3 sulfate(out) + n H(+)(out) = 25-hydroxyvitamin D3 sulfate(in) + n H(+)(in). The enzyme catalyses cholate(out) + n H(+)(out) = cholate(in) + n H(+)(in). It carries out the reaction glycocholate(out) + n H(+)(out) = glycocholate(in) + n H(+)(in). The catalysed reaction is taurocholate(out) + n H(+)(out) = taurocholate(in) + n H(+)(in). It catalyses the reaction dehydroepiandrosterone 3-sulfate(out) + n H(+)(out) = dehydroepiandrosterone 3-sulfate(in) + n H(+)(in). The enzyme catalyses N-acetyl-D-muramoyl-L-alanyl-D-isoglutamine(out) + n H(+)(out) = N-acetyl-D-muramoyl-L-alanyl-D-isoglutamine(in) + n H(+)(in). It carries out the reaction 2',3'-cGAMP(out) + n H(+)(out) = 2',3'-cGAMP(in) + n H(+)(in). Its function is as follows. Lysosomal proton-coupled steroid conjugate and bile acid transporter. Preferentially recognizes lipophilic steroid conjugates or bile acis as endogenous substrates and seems to mediate escape from lysosomes to the cytoplasm. Modulates hepatic cytosolic copper homeostasis, maybe acting as a lysosomal copper transporter and sequestering copper ions in the lysosome. Delivers pathogen-associated molecular patterns to cytosolic pattern recognition receptors as part of the innate immune response to microbes. Selectively transports bacterial muramyl dipeptide (MDP) into the cytosol for recognition by NOD2, triggering inflammatory responses. Likely acts as a redundant importer of cyclic GMP-AMP dinucleotides (cGAMPs) in monocyte and macrophage cell lineages. The transport mechanism, its electrogenicity and stoichiometry remain to be elucidated. This is Lysosomal proton-coupled steroid conjugate and bile acid symporter SLC46A3 (SLC46A3) from Bos taurus (Bovine).